The following is a 580-amino-acid chain: Acyl-coenzyme A synthetase ACSM4, mitochondrial (580 aa).

A mitochondrion-targeting transit peptide spans 1–22 (MKVLLHCQRLRFIWLAKPAGRH). Residues 229-237 (TSGTTGSPK), 368-373 (EGYGQT), Asp-455, Arg-470, and Lys-566 contribute to the ATP site.

The protein belongs to the ATP-dependent AMP-binding enzyme family. Requires Mg(2+) as cofactor. The cofactor is Mn(2+).

It localises to the mitochondrion. It catalyses the reaction a medium-chain fatty acid + ATP + CoA = a medium-chain fatty acyl-CoA + AMP + diphosphate. The catalysed reaction is hexanoate + ATP + CoA = hexanoyl-CoA + AMP + diphosphate. It carries out the reaction octanoate + ATP + CoA = octanoyl-CoA + AMP + diphosphate. The enzyme catalyses decanoate + ATP + CoA = decanoyl-CoA + AMP + diphosphate. It catalyses the reaction dodecanoate + ATP + CoA = dodecanoyl-CoA + AMP + diphosphate. Catalyzes the activation of fatty acids by CoA to produce an acyl-CoA, the first step in fatty acid metabolism. Capable of activating medium-chain fatty acids with a preference for C6-12 fatty acids. The protein is Acyl-coenzyme A synthetase ACSM4, mitochondrial (Acsm4) of Mus musculus (Mouse).